A 179-amino-acid chain; its full sequence is UPF0302 protein YpiB (179 aa).

The protein belongs to the UPF0302 family.

This is UPF0302 protein YpiB (ypiB) from Bacillus subtilis (strain 168).